Consider the following 141-residue polypeptide: ATP synthase epsilon chain (141 aa).

The protein belongs to the ATPase epsilon chain family. In terms of assembly, F-type ATPases have 2 components, CF(1) - the catalytic core - and CF(0) - the membrane proton channel. CF(1) has five subunits: alpha(3), beta(3), gamma(1), delta(1), epsilon(1). CF(0) has three main subunits: a, b and c.

The protein resides in the cell inner membrane. In terms of biological role, produces ATP from ADP in the presence of a proton gradient across the membrane. In Acidithiobacillus ferridurans, this protein is ATP synthase epsilon chain (atpC).